The sequence spans 184 residues: Photosystem I assembly protein Ycf4 (184 aa).

2 consecutive transmembrane segments (helical) span residues Phe-22–Ser-42 and Ile-57–Ser-77.

This sequence belongs to the Ycf4 family.

Its subcellular location is the plastid. It is found in the chloroplast thylakoid membrane. Seems to be required for the assembly of the photosystem I complex. This chain is Photosystem I assembly protein Ycf4, found in Gossypium barbadense (Sea Island cotton).